Here is a 598-residue protein sequence, read N- to C-terminus: Chaperone protein DnaK (598 aa).

At T180 the chain carries Phosphothreonine; by autocatalysis.

It belongs to the heat shock protein 70 family.

Acts as a chaperone. The chain is Chaperone protein DnaK from Thermosipho africanus (strain TCF52B).